The sequence spans 109 residues: Acylphosphatase (109 aa).

The region spanning 22-109 (RLRARVEGVV…GEFSSFDVVY (88 aa)) is the Acylphosphatase-like domain. Residues Arg-37 and Asn-55 contribute to the active site.

It belongs to the acylphosphatase family.

The catalysed reaction is an acyl phosphate + H2O = a carboxylate + phosphate + H(+). This Arthrobacter sp. (strain FB24) protein is Acylphosphatase (acyP).